The following is a 342-amino-acid chain: tRNA N6-adenosine threonylcarbamoyltransferase (342 aa).

Fe cation-binding residues include His111 and His115. Substrate contacts are provided by residues 134–138, Asp167, Gly180, and Asn275; that span reads LVSGG. Asp303 provides a ligand contact to Fe cation.

The protein belongs to the KAE1 / TsaD family. The cofactor is Fe(2+).

The protein resides in the cytoplasm. The enzyme catalyses L-threonylcarbamoyladenylate + adenosine(37) in tRNA = N(6)-L-threonylcarbamoyladenosine(37) in tRNA + AMP + H(+). Functionally, required for the formation of a threonylcarbamoyl group on adenosine at position 37 (t(6)A37) in tRNAs that read codons beginning with adenine. Is involved in the transfer of the threonylcarbamoyl moiety of threonylcarbamoyl-AMP (TC-AMP) to the N6 group of A37, together with TsaE and TsaB. TsaD likely plays a direct catalytic role in this reaction. The polypeptide is tRNA N6-adenosine threonylcarbamoyltransferase (Paraburkholderia xenovorans (strain LB400)).